The primary structure comprises 287 residues: Acetylglutamate kinase (287 aa).

Substrate is bound by residues 70-71, Arg92, and Asn184; that span reads GG.

Belongs to the acetylglutamate kinase family. ArgB subfamily.

It is found in the cytoplasm. The catalysed reaction is N-acetyl-L-glutamate + ATP = N-acetyl-L-glutamyl 5-phosphate + ADP. It functions in the pathway amino-acid biosynthesis; L-arginine biosynthesis; N(2)-acetyl-L-ornithine from L-glutamate: step 2/4. Its function is as follows. Catalyzes the ATP-dependent phosphorylation of N-acetyl-L-glutamate. This is Acetylglutamate kinase from Roseobacter denitrificans (strain ATCC 33942 / OCh 114) (Erythrobacter sp. (strain OCh 114)).